A 379-amino-acid polypeptide reads, in one-letter code: Cobalt-precorrin-5B C(1)-methyltransferase (379 aa).

Belongs to the CbiD family.

The enzyme catalyses Co-precorrin-5B + S-adenosyl-L-methionine = Co-precorrin-6A + S-adenosyl-L-homocysteine. The protein operates within cofactor biosynthesis; adenosylcobalamin biosynthesis; cob(II)yrinate a,c-diamide from sirohydrochlorin (anaerobic route): step 6/10. Its function is as follows. Catalyzes the methylation of C-1 in cobalt-precorrin-5B to form cobalt-precorrin-6A. In Salmonella heidelberg (strain SL476), this protein is Cobalt-precorrin-5B C(1)-methyltransferase.